Reading from the N-terminus, the 494-residue chain is Endoglucanase 1 (494 aa).

Residues 1-25 form the signal peptide; sequence MDCSSPLSLFHLLLVCTVMVKCCSA. The Nucleophile role is filled by Asp-82. N-linked (GlcNAc...) asparagine glycans are attached at residues Asn-254 and Asn-359. Residues His-411, Asp-462, and Glu-471 contribute to the active site.

The protein belongs to the glycosyl hydrolase 9 (cellulase E) family.

The enzyme catalyses Endohydrolysis of (1-&gt;4)-beta-D-glucosidic linkages in cellulose, lichenin and cereal beta-D-glucans.. Its function is as follows. Involved in ripening fruit process. The sequence is that of Endoglucanase 1 (CEL1) from Persea americana (Avocado).